A 463-amino-acid polypeptide reads, in one-letter code: O-phospho-L-seryl-tRNA:Cys-tRNA synthase 2 (463 aa).

Pyridoxal 5'-phosphate is bound by residues 154-155 (AR), Asn259, and 282-284 (SGH). Lys285 bears the N6-(pyridoxal phosphate)lysine mark.

It belongs to the SepCysS family. Homodimer. Interacts with SepRS. The cofactor is pyridoxal 5'-phosphate.

It catalyses the reaction O-phospho-L-seryl-tRNA(Cys) + hydrogen sulfide + H(+) = L-cysteinyl-tRNA(Cys) + phosphate. Functionally, converts O-phospho-L-seryl-tRNA(Cys) (Sep-tRNA(Cys)) to L-cysteinyl-tRNA(Cys) (Cys-tRNA(Cys)). The protein is O-phospho-L-seryl-tRNA:Cys-tRNA synthase 2 of Methanocella arvoryzae (strain DSM 22066 / NBRC 105507 / MRE50).